Here is a 333-residue protein sequence, read N- to C-terminus: Biotin synthase (333 aa).

The Radical SAM core domain occupies F54–R283. Residues C72, C76, and C79 each contribute to the [4Fe-4S] cluster site. Residues S116, C148, C208, and R278 each contribute to the [2Fe-2S] cluster site.

This sequence belongs to the radical SAM superfamily. Biotin synthase family. As to quaternary structure, homodimer. The cofactor is [4Fe-4S] cluster. It depends on [2Fe-2S] cluster as a cofactor.

It carries out the reaction (4R,5S)-dethiobiotin + (sulfur carrier)-SH + 2 reduced [2Fe-2S]-[ferredoxin] + 2 S-adenosyl-L-methionine = (sulfur carrier)-H + biotin + 2 5'-deoxyadenosine + 2 L-methionine + 2 oxidized [2Fe-2S]-[ferredoxin]. It functions in the pathway cofactor biosynthesis; biotin biosynthesis; biotin from 7,8-diaminononanoate: step 2/2. Functionally, catalyzes the conversion of dethiobiotin (DTB) to biotin by the insertion of a sulfur atom into dethiobiotin via a radical-based mechanism. This chain is Biotin synthase, found in Brachyspira hyodysenteriae (strain ATCC 49526 / WA1).